A 123-amino-acid chain; its full sequence is Large ribosomal subunit protein bL12 (123 aa).

It belongs to the bacterial ribosomal protein bL12 family. Homodimer. Part of the ribosomal stalk of the 50S ribosomal subunit. Forms a multimeric L10(L12)X complex, where L10 forms an elongated spine to which 2 to 4 L12 dimers bind in a sequential fashion. Binds GTP-bound translation factors.

In terms of biological role, forms part of the ribosomal stalk which helps the ribosome interact with GTP-bound translation factors. Is thus essential for accurate translation. This chain is Large ribosomal subunit protein bL12, found in Photorhabdus laumondii subsp. laumondii (strain DSM 15139 / CIP 105565 / TT01) (Photorhabdus luminescens subsp. laumondii).